Here is a 732-residue protein sequence, read N- to C-terminus: Glycine--tRNA ligase (732 aa).

The transit peptide at 1-27 directs the protein to the mitochondrion; the sequence is MRHVLSLVYKCSVFSKQVTVFSNHLRL. The region spanning 61-117 is the WHEP-TRS domain; it reads ILAPLRANVKEQGDLVRKLKEEKAPEIDIKKAVAELKTRKKILEDKELSLAPAEDLF. E297 serves as a coordination point for glycine. Residues 329-331 and 340-341 each bind ATP; these read RNE and RV. Residue E348 participates in glycine binding. 453–454 lines the ATP pocket; the sequence is EC. 572 to 574 contacts glycine; that stretch reads EPS. R579 is a binding site for ATP.

The protein belongs to the class-II aminoacyl-tRNA synthetase family. Homodimer.

The protein localises to the mitochondrion. Its subcellular location is the cytoplasm. The protein resides in the cell projection. It localises to the axon. It carries out the reaction tRNA(Gly) + glycine + ATP = glycyl-tRNA(Gly) + AMP + diphosphate. It catalyses the reaction 2 ATP + H(+) = P(1),P(4)-bis(5'-adenosyl) tetraphosphate + diphosphate. Functionally, catalyzes the ATP-dependent ligation of glycine to the 3'-end of its cognate tRNA, via the formation of an aminoacyl-adenylate intermediate (Gly-AMP). Also produces diadenosine tetraphosphate (Ap4A), a universal pleiotropic signaling molecule needed for cell regulation pathways, by direct condensation of 2 ATPs. Thereby, may play a special role in Ap4A homeostasis. Required for terminal arborization of both dendrites and axons during development. The chain is Glycine--tRNA ligase from Bombyx mori (Silk moth).